The sequence spans 279 residues: MRYVRLCVISLLATLPLVVYAGPQPLEQIKQSESQLSGRVGMVEMDLANGRTLAAWRADERFPMVSTFKVLLCGAVLARVDAGLEQLDRRIHYRQQDLVDYSPVSEKHLVDGMTIGELCAAAITLSDNSAGNLLLATVGGPAGLTAFLRQIGDNVTRLDRWETALNEALPGDARDTTTPASMAATLRKLLTAQHLSARSQQQLLQWMVDDRVAGPLIRAVLPPGWFIADKTGAGERGARGIVALLGPDGKPERIVVIYLRDTPASMAERNQHIAGIGQR.

Positions 1-21 (MRYVRLCVISLLATLPLVVYA) are cleaved as a signal peptide. Ser-66 functions as the Acyl-ester intermediate in the catalytic mechanism. Residues Cys-73 and Cys-119 are joined by a disulfide bond. 230 to 232 (KTG) is a binding site for substrate.

This sequence belongs to the class-A beta-lactamase family.

The enzyme catalyses a beta-lactam + H2O = a substituted beta-amino acid. This chain is Beta-lactamase, found in Klebsiella pneumoniae.